The sequence spans 2799 residues: E3 ubiquitin-protein ligase UBR5 (2799 aa).

Thr-2 bears the N-acetylthreonine mark. Residues 77-88 (DRLELGKPDNND) are compositionally biased toward basic and acidic residues. Residues 77-175 (DRLELGKPDN…DRGSGLLGSQ (99 aa)) form a disordered region. Positions 89-110 (GSKLNSNSGAGRTSRPGRTSDS) are enriched in polar residues. Ser-110 carries the post-translational modification Phosphoserine. Residues 135–144 (GVGGSGGGSS) are compositionally biased toward gly residues. The UBA domain maps to 184–226 (VIPEELISQAQVVLQGKSRSVIIRELQRTNLDVNLAVNNLLSR). Position 327 is a phosphoserine (Ser-327). Basic and acidic residues predominate over residues 328–347 (FDNERGSTSKEGEPNLDKKN). The tract at residues 328 to 352 (FDNERGSTSKEGEPNLDKKNTPVQS) is disordered. Residues Ser-352 and Ser-578 each carry the phosphoserine modification. The interval 579–648 (PESLKNMEKA…APKEEEKVNE (70 aa)) is disordered. The span at 583 to 604 (KNMEKASKTTEAKPESKQEPVK) shows a compositional bias: basic and acidic residues. Ser-612 is modified (phosphoserine). Over residues 614-628 (ASTCSDASSIASSAS) the composition is skewed to low complexity. Thr-637 bears the Phosphothreonine mark. Ser-808, Ser-928, and Ser-1018 each carry phosphoserine. Disordered stretches follow at residues 999-1031 (AGLG…PDPP) and 1052-1075 (TAAT…EPSV). Pro residues predominate over residues 1017–1031 (VSPPIAPPSWVPDPP). A compositionally biased stretch (polar residues) spans 1052–1073 (TAATGTGQGPSTSTIPGPSTEP). Residues Thr-1115 and Thr-1135 each carry the phosphothreonine modification. A UBR-type zinc finger spans residues 1177 to 1245 (DTCSFTWTGA…EKCKCKTLIA (69 aa)). Residues Cys-1179, Cys-1196, Cys-1199, Cys-1208, Cys-1211, Cys-1215, His-1216, and His-1219 each coordinate Zn(2+). Ser-1227 carries the phosphoserine modification. Residues Cys-1232, Cys-1234, and Cys-1240 each contribute to the Zn(2+) site. A disordered region spans residues 1299–1318 (REDRNRKTASPEDSDMPDHD). Phosphoserine is present on residues Ser-1308, Ser-1355, Ser-1375, and Ser-1481. The tract at residues 1515–1740 (SVEPLPPRPS…PSSTSTPAAS (226 aa)) is disordered. Over residues 1524–1537 (SSDQSSSSSQSQSS) the composition is skewed to low complexity. The span at 1538–1553 (YIIRNPQQRRISQSQP) shows a compositional bias: polar residues. The residue at position 1549 (Ser-1549) is a Phosphoserine. 2 stretches are compositionally biased toward acidic residues: residues 1559–1574 (EEQD…EVEV) and 1605–1614 (HDEDGSDMEL). The segment covering 1629–1638 (NHSNQDNASG) has biased composition (polar residues). Low complexity-rich tracts occupy residues 1641-1657 (SVVT…ASSV), 1668-1681 (SNDS…SSQS), and 1726-1740 (AAST…PAAS). Thr-1736 is subject to Phosphothreonine. Ser-1741 is modified (phosphoserine). The residue at position 1746 (Tyr-1746) is a Phosphotyrosine. Ser-1780 is modified (phosphoserine). A disordered region spans residues 1859–1890 (LASAGDPGHPNHPLHASQNSARRERMTAREEA). The segment covering 1879–1890 (ARRERMTAREEA) has biased composition (basic and acidic residues). Thr-1969 carries the post-translational modification Phosphothreonine. The segment at 1984 to 2021 (GIDNEDSEHENDDDTNQSATLNDKDDDSLPAETGQNHP) is disordered. Over residues 1985–1998 (IDNEDSEHENDDDT) the composition is skewed to acidic residues. 3 positions are modified to phosphoserine: Ser-1990, Ser-2026, and Ser-2028. Phosphothreonine is present on Thr-2030. Residue Ser-2076 is modified to Phosphoserine. Residues 2117 to 2142 (RQKKEGEEQPVLPEETESSKPGPSAH) are disordered. Thr-2213 carries the phosphothreonine modification. A phosphoserine mark is found at Ser-2241 and Ser-2289. Residues 2323–2392 (HTSLMQRLRN…PSDDPEPLPA (70 aa)) are disordered. Composition is skewed to basic and acidic residues over residues 2332–2348 (NRGE…EMRR) and 2356–2368 (SRRD…RRQL). The PABC domain maps to 2377-2454 (PASEGNPSDD…AMELIIAHGR (78 aa)). Residues 2462–2799 (LDLGLVDSSE…AIKTKNFGFV (338 aa)) form the HECT domain. Phosphoserine is present on residues Ser-2469, Ser-2484, and Ser-2486. The interval 2473 to 2493 (VQQENRKRHGSSRSVVDMDLD) is disordered. Cys-2768 acts as the Glycyl thioester intermediate in catalysis.

Belongs to the UBR5 family. As to quaternary structure, homotetramer; composed of a dimer of dimers. Associates with CDK9 and TFIIS/TCEA1 and forms a transcription regulatory complex made of CDK9, RNAP II, UBR5 and TFIIS/TCEA1 that can stimulate target gene transcription (e.g. gamma fibrinogen/FGG) by recruiting their promoters. Associates with the E3 ligase complex containing DYRK2, EDD/UBR5, DDB1 and DCAF1 proteins (EDVP complex). Binds TOPBP1. Interacts with PIH1D1. Interacts with CIB1. (Microbial infection) Interacts with human T-cell leukemia virus 1/HTLV-1 protein HBZ; this interaction modulates HBZ stability. Widely expressed. Most abundant in testis and expressed at high levels in brain, pituitary and kidney.

The protein localises to the nucleus. It localises to the cytoplasm. The enzyme catalyses S-ubiquitinyl-[E2 ubiquitin-conjugating enzyme]-L-cysteine + [acceptor protein]-L-lysine = [E2 ubiquitin-conjugating enzyme]-L-cysteine + N(6)-ubiquitinyl-[acceptor protein]-L-lysine.. It functions in the pathway protein modification; protein ubiquitination. Its function is as follows. E3 ubiquitin-protein ligase involved in different protein quality control pathways in the cytoplasm and nucleus. Mainly acts as a ubiquitin chain elongator that extends pre-ubiquitinated substrates. Component of the N-end rule pathway: ubiquitinates proteins bearing specific N-terminal residues that are destabilizing according to the N-end rule, leading to their degradation. Recognizes type-1 N-degrons, containing positively charged amino acids (Arg, Lys and His). Together with UBR4, part of a cytoplasm protein quality control pathway that prevents protein aggregation by catalyzing assembly of heterotypic 'Lys-11'-/'Lys-48'-linked branched ubiquitin chains on aggregated proteins, leading to substrate recognition by the segregase p97/VCP and degradation by the proteasome: UBR5 is probably branching multiple 'Lys-48'-linked chains of substrates initially modified with mixed conjugates by UBR4. Together with ITCH, catalyzes 'Lys-48'-/'Lys-63'-branched ubiquitination of TXNIP, leading to its degradation: UBR5 mediates branching of 'Lys-48'-linked chains of substrates initially modified with 'Lys-63'-linked conjugates by ITCH. Catalytic component of a nuclear protein quality control pathway that mediates ubiquitination and degradation of unpaired transcription factors (i.e. transcription factors that are not assembled into functional multiprotein complexes): specifically recognizes and binds degrons that are not accessible when transcription regulators are associated with their coactivators. Ubiquitinates various unpaired transcription regulator (MYC, SUPT4H1, SUPT5H, CDC20 and MCRS1), as well as ligand-bound nuclear receptors (ESR1, NR1H3, NR3C1, PGR, RARA, RXRA AND VDR) that are not associated with their nuclear receptor coactivators (NCOAs). Involved in maturation and/or transcriptional regulation of mRNA by mediating polyubiquitination and activation of CDK9. Also acts as a regulator of DNA damage response by acting as a suppressor of RNF168, an E3 ubiquitin-protein ligase that promotes accumulation of 'Lys-63'-linked histone H2A and H2AX at DNA damage sites, thereby acting as a guard against excessive spreading of ubiquitinated chromatin at damaged chromosomes. Regulates DNA topoisomerase II binding protein (TopBP1) in the DNA damage response. Ubiquitinates acetylated PCK1. Acts as a positive regulator of the canonical Wnt signaling pathway by mediating (1) ubiquitination and stabilization of CTNNB1, and (2) 'Lys-48'-linked ubiquitination and degradation of TLE3. Promotes disassembly of the mitotic checkpoint complex (MCC) from the APC/C complex by catalyzing ubiquitination of BUB1B, BUB3 and CDC20. Plays an essential role in extraembryonic development. Required for the maintenance of skeletal tissue homeostasis by acting as an inhibitor of hedgehog (HH) signaling. The protein is E3 ubiquitin-protein ligase UBR5 (UBR5) of Homo sapiens (Human).